A 579-amino-acid chain; its full sequence is PCNA-interacting partner (579 aa).

Residues Thr480 to Ser543 form a disordered region. The span at His486–Ser496 shows a compositional bias: basic and acidic residues.

This sequence belongs to the PARI family. Interacts with RAD51 and PCNA. Interacts with PARP1. Interacts with TASOR. As to expression, restricted to testis. Overexpressed in multiple cancer cells.

The protein resides in the cytoplasm. It is found in the nucleus. In terms of biological role, required to suppress inappropriate homologous recombination, thereby playing a central role DNA repair and in the maintenance of genomic stability. Antagonizes homologous recombination by interfering with the formation of the RAD51-DNA homologous recombination structure. Binds single-strand DNA and poly(A) homopolymers. Positively regulate the poly(ADP-ribosyl)ation activity of PARP1; however such function may be indirect. The polypeptide is PCNA-interacting partner (PARPBP) (Homo sapiens (Human)).